Reading from the N-terminus, the 622-residue chain is DNA topoisomerase 3 (622 aa).

Residues 2–148 (RVLCVAEKNS…SIQVIRADFN (147 aa)) form the Toprim domain. One can recognise a Topo IA-type catalytic domain in the interval 166-596 (SKNAADAVDA…MILTQFRDVF (431 aa)). The O-(5'-phospho-DNA)-tyrosine intermediate role is filled by Tyr330.

Belongs to the type IA topoisomerase family. In terms of assembly, interacts with hus2.

The catalysed reaction is ATP-independent breakage of single-stranded DNA, followed by passage and rejoining.. Its function is as follows. Releases the supercoiling and torsional tension of DNA introduced during the DNA replication and transcription by transiently cleaving and rejoining one strand of the DNA duplex. Introduces a single-strand break via transesterification at a target site in duplex DNA. The scissile phosphodiester is attacked by the catalytic tyrosine of the enzyme, resulting in the formation of a DNA-(5'-phosphotyrosyl)-enzyme intermediate and the expulsion of a 3'-OH DNA strand. The free DNA strand than undergoes passage around the unbroken strand thus removing DNA supercoils. Finally, in the religation step, the DNA 3'-OH attacks the covalent intermediate to expel the active-site tyrosine and restore the DNA phosphodiester backbone. This is DNA topoisomerase 3 (top3) from Schizosaccharomyces pombe (strain 972 / ATCC 24843) (Fission yeast).